We begin with the raw amino-acid sequence, 292 residues long: Zinc finger protein SNAI3 (292 aa).

The SNAG domain stretch occupies residues 1–20 (MPRSFLVKTHSSHRVPNYRR). 4 C2H2-type zinc fingers span residues 152–174 (FECF…RQLH), 183–205 (FTCK…IRTH), 209–231 (CTCK…VRTH), and 237–259 (YACS…LQTH). A C2H2-type 5; degenerate zinc finger spans residues 265-287 (YRCRRCTKTFSRMSLLARHEESG).

The protein belongs to the snail C2H2-type zinc-finger protein family.

The protein resides in the nucleus. Its function is as follows. Seems to inhibit myoblast differentiation. Transcriptional repressor of E-box-dependent transactivation of downstream myogenic bHLHs genes. Binds preferentially to the canonical E-box sequences 5'-CAGGTG-3' and 5'-CACCTG-3'. This is Zinc finger protein SNAI3 (SNAI3) from Homo sapiens (Human).